The primary structure comprises 350 residues: Guanine nucleotide-binding protein G(t) subunit alpha-1 (350 aa).

Residues 1–21 (MGAGASAEEKHSRELEKKLKE) form a disordered region. Glycine 2 carries N-myristoyl glycine lipidation. Basic and acidic residues predominate over residues 7–21 (AEEKHSRELEKKLKE). In terms of domain architecture, G-alpha spans 28–350 (RTVKLLLLGA…KENLKDCGLF (323 aa)). The tract at residues 31 to 44 (KLLLLGAGESGKST) is G1 motif. Residue 36-43 (GAGESGKS) coordinates GTP. Serine 43 is a binding site for Mg(2+). At tyrosine 142 the chain carries Phosphotyrosine. Residues aspartate 146, 171 to 177 (LRSRVKT), glycine 199, 265 to 268 (NKKD), and alanine 322 contribute to the GTP site. Residues 169–177 (DVLRSRVKT) form a G2 motif region. Residue threonine 177 participates in Mg(2+) binding. The interval 192-201 (FRMFDVGGQR) is G3 motif. The G4 motif stretch occupies residues 261 to 268 (VLFLNKKD). Residues 320-325 (TCATDT) form a G5 motif region. The interaction with RHO stretch occupies residues 340-350 (IKENLKDCGLF).

In terms of assembly, heterotrimeric G proteins are composed of 3 subunits alpha, beta and gamma. The alpha chain contains the guanine nucleotide binding site. Interacts with RHO. Interacts with RGS9 and PDE6G. Interacts (when myristoylated) with UNC119; interaction is required for localization in sensory neurons. As to expression, rod.

The protein localises to the cell projection. Its subcellular location is the cilium. It localises to the photoreceptor outer segment. The protein resides in the membrane. It is found in the photoreceptor inner segment. In terms of biological role, functions as a signal transducer for the rod photoreceptor RHO. Required for normal RHO-mediated light perception by the retina. Guanine nucleotide-binding proteins (G proteins) function as transducers downstream of G protein-coupled receptors (GPCRs), such as the photoreceptor RHO. The alpha chain contains the guanine nucleotide binding site and alternates between an active, GTP-bound state and an inactive, GDP-bound state. Activated RHO promotes GDP release and GTP binding. Signaling is mediated via downstream effector proteins, such as cGMP-phosphodiesterase. This chain is Guanine nucleotide-binding protein G(t) subunit alpha-1 (GNAT1), found in Bos taurus (Bovine).